The chain runs to 198 residues: uncharacterized protein (198 aa).

This is an uncharacterized protein from Acheta domesticus (House cricket).